The following is a 364-amino-acid chain: Probable cysteine protease RDL4 (364 aa).

The signal sequence occupies residues 1–23 (MGSAKSAMLILLVAMVIASCATA). Positions 24 to 136 (IDMSVVSYDD…DRYKTSADDV (113 aa)) are cleaved as a propeptide — activation peptide. N-linked (GlcNAc...) asparagine glycosylation occurs at asparagine 87. Disulfide bonds link cysteine 158-cysteine 199, cysteine 192-cysteine 232, and cysteine 291-cysteine 342. Cysteine 161 is a catalytic residue. Active-site residues include histidine 297 and asparagine 317.

It belongs to the peptidase C1 family. Expressed in inflorescences.

In terms of biological role, probable thiol protease. The chain is Probable cysteine protease RDL4 from Arabidopsis thaliana (Mouse-ear cress).